Consider the following 158-residue polypeptide: Eukaryotic translation initiation factor 5A-3 (158 aa).

The segment covering 1–10 (MSDDEHHFES) has biased composition (basic and acidic residues). The disordered stretch occupies residues 1–23 (MSDDEHHFESSDAGASKTYPQQA). Residue Ser2 is modified to Phosphoserine. Lys51 is modified (hypusine).

It belongs to the eIF-5A family. Post-translationally, lys-52 undergoes hypusination, a unique post-translational modification that consists in the addition of a butylamino group from spermidine to lysine side chain, leading to the formation of the unusual amino acid hypusine. eIF-5As are the only known proteins to undergo this modification, which is essential for their function. Expressed in the vascular tissues of roots, stems and leaves. Localized in phloem companion cells rather than sieve-tube members. Not expressed in xylem or procambium. Detected in root tips and in the chalazal tissue of fertilized ovules.

Functionally, translation factor that promotes translation elongation and termination, particularly upon ribosome stalling at specific amino acid sequence contexts. Binds between the exit (E) and peptidyl (P) site of the ribosome and promotes rescue of stalled ribosome: specifically required for efficient translation of polyproline-containing peptides as well as other motifs that stall the ribosome. Acts as a ribosome quality control (RQC) cofactor by joining the RQC complex to facilitate peptidyl transfer during CAT tailing step. Involved in supporting growth and plays a regulatory role in the response to sub-lethal osmotic and nutrient stress. This chain is Eukaryotic translation initiation factor 5A-3 (ELF5A-3), found in Arabidopsis thaliana (Mouse-ear cress).